A 113-amino-acid polypeptide reads, in one-letter code: Large ribosomal subunit protein uL22 (113 aa).

It belongs to the universal ribosomal protein uL22 family. As to quaternary structure, part of the 50S ribosomal subunit.

This protein binds specifically to 23S rRNA; its binding is stimulated by other ribosomal proteins, e.g. L4, L17, and L20. It is important during the early stages of 50S assembly. It makes multiple contacts with different domains of the 23S rRNA in the assembled 50S subunit and ribosome. Functionally, the globular domain of the protein is located near the polypeptide exit tunnel on the outside of the subunit, while an extended beta-hairpin is found that lines the wall of the exit tunnel in the center of the 70S ribosome. The sequence is that of Large ribosomal subunit protein uL22 from Geobacillus thermodenitrificans (strain NG80-2).